Here is a 387-residue protein sequence, read N- to C-terminus: Cytochrome b (387 aa).

4 helical membrane passes run 32–52, 76–98, 113–133, and 179–199; these read FGSL…TLAM, WLVR…LHIG, TWAI…LGYV, and FFAL…MHLI. 2 residues coordinate heme b: histidine 82 and histidine 96. Residues histidine 183 and histidine 197 each contribute to the heme b site. Histidine 202 provides a ligand contact to a ubiquinone. 4 helical membrane-spanning segments follow: residues 226–246, 290–310, 322–342, and 349–369; these read FIFK…IFVF, LLGV…PITD, LSKV…QIGA, and FIEF…VIVP.

Belongs to the cytochrome b family. In terms of assembly, fungal cytochrome b-c1 complex contains 10 subunits; 3 respiratory subunits, 2 core proteins and 5 low-molecular weight proteins. Cytochrome b-c1 complex is a homodimer. Heme b serves as cofactor.

The protein localises to the mitochondrion inner membrane. Functionally, component of the ubiquinol-cytochrome c reductase complex (complex III or cytochrome b-c1 complex) that is part of the mitochondrial respiratory chain. The b-c1 complex mediates electron transfer from ubiquinol to cytochrome c. Contributes to the generation of a proton gradient across the mitochondrial membrane that is then used for ATP synthesis. The sequence is that of Cytochrome b (cob) from Emericella nidulans (Aspergillus nidulans).